Consider the following 420-residue polypeptide: Phosphoribosylamine--glycine ligase (420 aa).

The region spanning 108 to 314 (KQFMEKYAIP…FAALIAALLN (207 aa)) is the ATP-grasp domain. 134-195 (LDERGVPIVI…EDFLAGEEFS (62 aa)) serves as a coordination point for ATP. Mg(2+) is bound by residues Glu284 and Asn286.

This sequence belongs to the GARS family. Requires Mg(2+) as cofactor. It depends on Mn(2+) as a cofactor.

The catalysed reaction is 5-phospho-beta-D-ribosylamine + glycine + ATP = N(1)-(5-phospho-beta-D-ribosyl)glycinamide + ADP + phosphate + H(+). The protein operates within purine metabolism; IMP biosynthesis via de novo pathway; N(1)-(5-phospho-D-ribosyl)glycinamide from 5-phospho-alpha-D-ribose 1-diphosphate: step 2/2. The chain is Phosphoribosylamine--glycine ligase from Listeria innocua serovar 6a (strain ATCC BAA-680 / CLIP 11262).